A 328-amino-acid polypeptide reads, in one-letter code: Phosphate acyltransferase (328 aa).

It belongs to the PlsX family. As to quaternary structure, homodimer. Probably interacts with PlsY.

The protein resides in the cytoplasm. It carries out the reaction a fatty acyl-[ACP] + phosphate = an acyl phosphate + holo-[ACP]. It participates in lipid metabolism; phospholipid metabolism. Functionally, catalyzes the reversible formation of acyl-phosphate (acyl-PO(4)) from acyl-[acyl-carrier-protein] (acyl-ACP). This enzyme utilizes acyl-ACP as fatty acyl donor, but not acyl-CoA. This is Phosphate acyltransferase from Staphylococcus aureus (strain MSSA476).